The following is a 333-amino-acid chain: MLKVGYKASAEQFGPRDLVEYAVRAEEVGLDSVWVSDHFLPWRHEGGHAPWALAWMPAVAERTKRVQIGTSVLTPTFRYNPAVIAQAFATMSLLSNGRVILGVGSGEALNEIAVSGREWPEFKERFARLRESIKLIRELWTSDNVNFKGDYYELVDAKIYDRPEQPVPVYIAAGGPVVAKYAGRAGDGFICTSGKGMELYTDKLMPAVKEGAEAAEKTVEDVDRTIEIKLSYDRDHEKALENTRFWAPLSLSAEQKHSVSSAEEMERLADELPIDQVAKRWIVASDPDEAVAQIKPYLDAGLNHLVFHGPGHDQERFLTQFSEDVLPKLRALG.

D37 is a binding site for coenzyme F420-(gamma-Glu)n. H38 (proton donor) is an active-site residue. Residues T74 and 105–106 (SG) contribute to the coenzyme F420-(gamma-Glu)n site. Catalysis depends on E107, which acts as the Proton acceptor. Residues N110, 174-175 (GG), and 177-178 (VV) each bind coenzyme F420-(gamma-Glu)n. Residues T192, K195, K256, and R280 each coordinate substrate.

Belongs to the F420-dependent glucose-6-phosphate dehydrogenase family. Homodimer.

It catalyses the reaction oxidized coenzyme F420-(gamma-L-Glu)(n) + D-glucose 6-phosphate + H(+) = 6-phospho-D-glucono-1,5-lactone + reduced coenzyme F420-(gamma-L-Glu)(n). Functionally, catalyzes the coenzyme F420-dependent oxidation of glucose 6-phosphate (G6P) to 6-phosphogluconolactone. This chain is F420-dependent glucose-6-phosphate dehydrogenase, found in Amycolatopsis mediterranei (strain U-32).